Here is a 446-residue protein sequence, read N- to C-terminus: BAG family molecular chaperone regulator 7 (446 aa).

The disordered stretch occupies residues 230-252 (TGGEKKKKHEEKEKKEKIETKSK). Residues 239–250 (EEKEKKEKIETK) show a composition bias toward basic and acidic residues. In terms of domain architecture, IQ spans 303–332 (PEYAAVMIQRAFKAYLIRRSKSLRALRDLA). Residues 330–407 (DLAIAKTKLK…AMLDVVDPQP (78 aa)) form the BAG domain. Thr-443 carries the phosphothreonine modification.

In terms of assembly, binds to the ATPase domain of HSP70/HSC70 chaperones. Interacts with HSP70-11/BIP2.

The protein localises to the endoplasmic reticulum. Co-chaperone that regulates diverse cellular pathways, such as programmed cell death and stress responses. Necessary for the proper maintenance of the unfolded protein response (UPR) during heat and cold tolerance. The sequence is that of BAG family molecular chaperone regulator 7 (BAG7) from Arabidopsis thaliana (Mouse-ear cress).